A 636-amino-acid polypeptide reads, in one-letter code: Threonine--tRNA ligase (636 aa).

In terms of domain architecture, TGS spans 1–61 (MINITLPDGK…ETDASVVFIT (61 aa)). The segment at 238-528 (DHRKLGTALD…LIEHYAGKFP (291 aa)) is catalytic. Zn(2+) contacts are provided by Cys329, His380, and His505.

The protein belongs to the class-II aminoacyl-tRNA synthetase family. As to quaternary structure, homodimer. It depends on Zn(2+) as a cofactor.

The protein localises to the cytoplasm. It catalyses the reaction tRNA(Thr) + L-threonine + ATP = L-threonyl-tRNA(Thr) + AMP + diphosphate + H(+). In terms of biological role, catalyzes the attachment of threonine to tRNA(Thr) in a two-step reaction: L-threonine is first activated by ATP to form Thr-AMP and then transferred to the acceptor end of tRNA(Thr). Also edits incorrectly charged L-seryl-tRNA(Thr). The chain is Threonine--tRNA ligase from Desulfatibacillum aliphaticivorans.